The chain runs to 921 residues: MAPPVLRPENALKRADELISVGEPQAALQSLLDYITSRRIRFADPAAIEPIVFKFLELGVELKRGKVIKDGLYQYRKHVQSSTEGLKSVGAVSRRFIDLIEKKMSSEQAKANAEESTEEDLEGGVTPENLLISVYEQDQSVGGFNDEAVTSWLRFTWESYRTVLDLLRNNSQLEITYSGVVNRAMQFCLKYNRKNEFKRLADMLRQHLDAANYQQQKSKQYTVDLSDPDTLQRYLDQRILQVNVSVKLGLWHEAFRSIEDVHHLLSMSTRDPKPSVLANYYQNMAKVFFVSSNYLLNSVALQKFYDLYQQNPKATDEDFKFYASQLVLSALSIQQDDLPVVGYDPLARLAGFLNLESKPTRSQVIEAVSDSKIFSRADEPVKKLYELLNSDFDVNTLKESLASLLPELNSKSYFTQYVEPLKSFTIRKAFISASKQFGSIKLDELFEHTSLPSPFDLSPLDLEKSLLQAAMNDYVSFSIDHDAGVVSFMEDPFELLGGSTATNADDEQRNDDGYEETHVEEEPEPILTRNSAVRTQLIELAKALKETEGFPHASYVDKVRMARNELIRQNNAIIASEKEAAEERARQLEYEKQSASGVPLTAEQVVEERQRRMKEEKEAAEARMEAEARRRAEEKRERELAAINEKTMLKMIEDINAKGLIFIDPKEAKNMTLEKFKKLTVELVSKDKKDLDERMSHAFKRVDHIERAYRKLEAPLWEKDAQKQKERDLESYNKLKQMMVEKAKKDHEENLRIHDRLVKIYPSYLHFREKVIAAQKSQIEALRAENAAKLEAAKNARLQEVRQQRYNELIARRKEELAAKEHDDRQRMLQDRLTKERKERERVNKEKDEAARKQREIEEAVERTIKRNVSATPAPPVRSAPPARAAPPPRASNEQVASPAPQPEKKLTYAEKMKLRRAGRA.

In terms of domain architecture, PCI spans 319–493 (FKFYASQLVL…GVVSFMEDPF (175 aa)). Residues 497–524 (GGSTATNADDEQRNDDGYEETHVEEEPE) form a disordered region. Over residues 506–517 (DEQRNDDGYEET) the composition is skewed to basic and acidic residues. Coiled-coil stretches lie at residues 562-647 (ARNE…NEKT) and 693-868 (ERMS…IKRN). A compositionally biased stretch (basic and acidic residues) spans 818–865 (AAKEHDDRQRMLQDRLTKERKERERVNKEKDEAARKQREIEEAVERTI). Residues 818–921 (AAKEHDDRQR…KMKLRRAGRA (104 aa)) are disordered. Pro residues predominate over residues 873–890 (PAPPVRSAPPARAAPPPR). Residues 903-913 (PEKKLTYAEKM) are compositionally biased toward basic and acidic residues.

The protein belongs to the eIF-3 subunit A family. As to quaternary structure, component of the eukaryotic translation initiation factor 3 (eIF-3) complex.

The protein localises to the cytoplasm. Its function is as follows. RNA-binding component of the eukaryotic translation initiation factor 3 (eIF-3) complex, which is involved in protein synthesis of a specialized repertoire of mRNAs and, together with other initiation factors, stimulates binding of mRNA and methionyl-tRNAi to the 40S ribosome. The eIF-3 complex specifically targets and initiates translation of a subset of mRNAs involved in cell proliferation. The sequence is that of Eukaryotic translation initiation factor 3 subunit A from Eremothecium gossypii (strain ATCC 10895 / CBS 109.51 / FGSC 9923 / NRRL Y-1056) (Yeast).